Here is a 264-residue protein sequence, read N- to C-terminus: S-adenosylmethionine decarboxylase proenzyme (264 aa).

Serine 112 (schiff-base intermediate with substrate; via pyruvic acid) is an active-site residue. Serine 112 is modified (pyruvic acid (Ser); by autocatalysis). The Proton acceptor; for processing activity role is filled by histidine 117. Catalysis depends on cysteine 140, which acts as the Proton donor; for catalytic activity.

This sequence belongs to the prokaryotic AdoMetDC family. Type 2 subfamily. In terms of assembly, heterooctamer of four alpha and four beta chains arranged as a tetramer of alpha/beta heterodimers. Requires pyruvate as cofactor. Is synthesized initially as an inactive proenzyme. Formation of the active enzyme involves a self-maturation process in which the active site pyruvoyl group is generated from an internal serine residue via an autocatalytic post-translational modification. Two non-identical subunits are generated from the proenzyme in this reaction, and the pyruvate is formed at the N-terminus of the alpha chain, which is derived from the carboxyl end of the proenzyme. The post-translation cleavage follows an unusual pathway, termed non-hydrolytic serinolysis, in which the side chain hydroxyl group of the serine supplies its oxygen atom to form the C-terminus of the beta chain, while the remainder of the serine residue undergoes an oxidative deamination to produce ammonia and the pyruvoyl group blocking the N-terminus of the alpha chain.

The enzyme catalyses S-adenosyl-L-methionine + H(+) = S-adenosyl 3-(methylsulfanyl)propylamine + CO2. The protein operates within amine and polyamine biosynthesis; S-adenosylmethioninamine biosynthesis; S-adenosylmethioninamine from S-adenosyl-L-methionine: step 1/1. Its function is as follows. Catalyzes the decarboxylation of S-adenosylmethionine to S-adenosylmethioninamine (dcAdoMet), the propylamine donor required for the synthesis of the polyamines spermine and spermidine from the diamine putrescine. The protein is S-adenosylmethionine decarboxylase proenzyme of Salmonella arizonae (strain ATCC BAA-731 / CDC346-86 / RSK2980).